The chain runs to 383 residues: Succinate--CoA ligase [ADP-forming] subunit beta (383 aa).

The ATP-grasp domain maps to 9-236 (KELLGRFGLR…VEAADPQEHR (228 aa)). Residues Lys-45, 52–54 (GRG), Glu-91, Ala-94, and Glu-99 contribute to the ATP site. Positions 191 and 205 each coordinate Mg(2+). Substrate contacts are provided by residues Asn-256 and 313–315 (GIT).

The protein belongs to the succinate/malate CoA ligase beta subunit family. As to quaternary structure, heterotetramer of two alpha and two beta subunits. Mg(2+) serves as cofactor.

The catalysed reaction is succinate + ATP + CoA = succinyl-CoA + ADP + phosphate. It carries out the reaction GTP + succinate + CoA = succinyl-CoA + GDP + phosphate. The protein operates within carbohydrate metabolism; tricarboxylic acid cycle; succinate from succinyl-CoA (ligase route): step 1/1. Functionally, succinyl-CoA synthetase functions in the citric acid cycle (TCA), coupling the hydrolysis of succinyl-CoA to the synthesis of either ATP or GTP and thus represents the only step of substrate-level phosphorylation in the TCA. The beta subunit provides nucleotide specificity of the enzyme and binds the substrate succinate, while the binding sites for coenzyme A and phosphate are found in the alpha subunit. The sequence is that of Succinate--CoA ligase [ADP-forming] subunit beta from Rubrobacter xylanophilus (strain DSM 9941 / JCM 11954 / NBRC 16129 / PRD-1).